We begin with the raw amino-acid sequence, 746 residues long: Histone-lysine N-methyltransferase EZH2 (746 aa).

The interval 1–340 is interaction with DNMT1, DNMT3A and DNMT3B; it reads MGQTGKKSEK…AKEFAAALTA (340 aa). The residue at position 21 (S21) is a Phosphoserine; by PKB/AKT1. Residues 39–68 are interaction with EED; the sequence is KTMFSSNRQKILERTETLNQEWKQRRIQPV. O-linked (GlcNAc) serine glycosylation is present at S75. S76 carries the post-translational modification Phosphoserine. The disordered stretch occupies residues 180–217; it reads QYNDDDDDDDGDDPDEREEKQKDLEDNRDDKETCPPRK. The segment covering 182–195 has biased composition (acidic residues); it reads NDDDDDDDGDDPDE. Over residues 196-217 the composition is skewed to basic and acidic residues; sequence REEKQKDLEDNRDDKETCPPRK. The interval 329–522 is interaction with CDYL; the sequence is EGAKEFAAAL…SSNHVYNYQP (194 aa). T339 is modified (phosphothreonine). The disordered stretch occupies residues 340 to 426; that stretch reads AERIKTPPKR…PIKMKPNIEP (87 aa). The residue at position 345 (T345) is a Phosphothreonine; by CDK1 and CDK2. Residues 345–357 show a composition bias toward basic residues; it reads TPPKRPGGRRRGR. Residues S363 and S366 each carry the phosphoserine modification. Phosphothreonine is present on T367. Over residues 374–385 the composition is skewed to basic and acidic residues; sequence ESKDTDSDREAG. T487 carries the phosphothreonine modification. Residues 503-605 enclose the CXC domain; sequence CRKIQLKKDG…SKNVSCKNCS (103 aa). The 116-residue stretch at 612–727 folds into the SET domain; it reads KHLLLAPSDV…TGEELFFDYR (116 aa). Residue K634 forms a Glycyl lysine isopeptide (Lys-Gly) (interchain with G-Cter in SUMO2) linkage.

The protein belongs to the class V-like SAM-binding methyltransferase superfamily. Histone-lysine methyltransferase family. EZ subfamily. Component of the PRC2/EED-EZH2 complex, which includes EED, EZH2, SUZ12, RBBP4 and RBBP7 and possibly AEBP2. The minimum components required for methyltransferase activity of the PRC2/EED-EZH2 complex are EED, EZH2 and SUZ12. The PRC2 complex may also interact with DNMT1, DNMT3A, DNMT3B and PHF1 via the EZH2 subunit and with SIRT1 via the SUZ12 subunit. Interacts with HDAC1 and HDAC2. Binds ATRX via the SET domain. Interacts with PRAME. Interacts with CDYL. Interacts with EED. Interacts with BMAL1. Interacts with CLOCK and CRY1. Interacts with DNMT3L; the interaction is direct. Interacts with EZHIP; the interaction blocks EZH2 methyltransferase activity. Interacts with ZNF263; recruited to the SIX3 promoter along with other proteins involved in chromatin modification and transcriptional corepression where it contributes to transcriptional repression. Interacts with ARMC12. Interacts with ZMYND8; the interaction is dependent on the presence of chromatin. Interacts with DDX18; this interaction inhibits the PRC2 complex. Post-translationally, phosphorylated by AKT1. Phosphorylation by AKT1 reduces methyltransferase activity. Phosphorylation at Thr-345 by CDK1 and CDK2 promotes maintenance of H3K27me3 levels at EZH2-target loci, thus leading to epigenetic gene silencing. In terms of processing, sumoylated. Glycosylated: O-GlcNAcylation at Ser-75 by OGT increases stability of EZH2 and facilitates the formation of H3K27me3 by the PRC2/EED-EZH2 complex. In terms of tissue distribution, present in actively dividing cells. Widely expressed in early embryos. In later embryogenesis, expression restricted to central and peripheral nervous system, liver and thymus. In adult, highest expression in spleen, testis and placenta. Lower levels in intestine, muscle and ovary and very low levels in brain and liver. No expression in heart, thyroid gland, lung and kidney.

It localises to the nucleus. The protein localises to the chromosome. The catalysed reaction is L-lysyl(27)-[histone H3] + 3 S-adenosyl-L-methionine = N(6),N(6),N(6)-trimethyl-L-lysyl(27)-[histone H3] + 3 S-adenosyl-L-homocysteine + 3 H(+). Functionally, polycomb group (PcG) protein. Catalytic subunit of the PRC2/EED-EZH2 complex, which methylates (H3K9me) and 'Lys-27' (H3K27me) of histone H3, leading to transcriptional repression of the affected target gene. Able to mono-, di- and trimethylate 'Lys-27' of histone H3 to form H3K27me1, H3K27me2 and H3K27me3, respectively. Displays a preference for substrates with less methylation, loses activity when progressively more methyl groups are incorporated into H3K27, H3K27me0 &gt; H3K27me1 &gt; H3K27me2. Compared to EZH1-containing complexes, it is more abundant in embryonic stem cells and plays a major role in forming H3K27me3, which is required for embryonic stem cell identity and proper differentiation. The PRC2/EED-EZH2 complex may also serve as a recruiting platform for DNA methyltransferases, thereby linking two epigenetic repression systems. Genes repressed by the PRC2/EED-EZH2 complex include HOXA7, HOXB6 and HOXC8. EZH2 can also methylate non-histone proteins such as the transcription factor GATA4 and the nuclear receptor RORA. Regulates the circadian clock via histone methylation at the promoter of the circadian genes. Essential for the CRY1/2-mediated repression of the transcriptional activation of PER1/2 by the CLOCK-BMAL1 heterodimer; involved in the di and trimethylation of 'Lys-27' of histone H3 on PER1/2 promoters which is necessary for the CRY1/2 proteins to inhibit transcription. In Mus musculus (Mouse), this protein is Histone-lysine N-methyltransferase EZH2.